We begin with the raw amino-acid sequence, 630 residues long: Arginine--tRNA ligase (630 aa).

Positions 120-130 (ANPVHPLHIGH) match the 'HIGH' region motif.

It belongs to the class-I aminoacyl-tRNA synthetase family.

Its subcellular location is the cytoplasm. It catalyses the reaction tRNA(Arg) + L-arginine + ATP = L-arginyl-tRNA(Arg) + AMP + diphosphate. The polypeptide is Arginine--tRNA ligase (Pyrobaculum aerophilum (strain ATCC 51768 / DSM 7523 / JCM 9630 / CIP 104966 / NBRC 100827 / IM2)).